The primary structure comprises 283 residues: Acyl-coenzyme A diphosphatase FITM2 (283 aa).

The segment covering 1–11 (MSTRRSSTRAD) has biased composition (low complexity). The tract at residues 1–21 (MSTRRSSTRADSTTKRPASPN) is disordered. Topologically, residues 1–39 (MSTRRSSTRADSTTKRPASPNSTPNAALGIFVAIARQIL) are cytoplasmic. The helical transmembrane segment at 40-60 (FIDARKVALFYLAFVTVLSFI) threads the bilayer. At 61 to 81 (ESRIELDSTYYLVQKHSVLNQ) the chain is on the lumenal side. The helical transmembrane segment at 82–102 (YGVKMGWFWTLVIVGPFIWFS) threads the bilayer. Over 103–120 (SKAHNRRDRDQPIVDVCR) the chain is Cytoplasmic. Residues 121 to 141 (LGVGTACWYFSVQFFHKVLAL) traverse the membrane as a helical segment. At 142 to 168 (TSMCDKGRTLTRAQCSEKEGVWTPGYD) the chain is on the lumenal side. A helical membrane pass occupies residues 169–189 (ISGHCFLMIYSILIITEEAIA). The active site involves histidine 172. Residues 190–219 (YRHYQQVTDAVHQMDGDREEHDRLTRCIQY) are Cytoplasmic-facing. The next 2 membrane-spanning stretches (helical) occupy residues 220–240 (FFVA…ISVL) and 241–261 (YYHI…CWFV). Residue histidine 243 is part of the active site. The Cytoplasmic segment spans residues 262 to 283 (TYRMLYPAGFLASPIRRTVGRK).

It belongs to the FIT family. FIT2 subfamily.

The protein resides in the endoplasmic reticulum membrane. It carries out the reaction an acyl-CoA + H2O = an acyl-4'-phosphopantetheine + adenosine 3',5'-bisphosphate + 2 H(+). Functionally, fatty acyl-coenzyme A (CoA) diphosphatase that hydrolyzes fatty acyl-CoA to yield acyl-4'-phosphopantetheine and adenosine 3',5'-bisphosphate. Preferentially hydrolyzes unsaturated long-chain acyl-CoA substrates in the endoplasmic reticulum (ER) lumen. This catalytic activity is required for maintaining ER structure and for lipid droplets (LDs) biogenesis, which are lipid storage organelles involved in maintaining lipid and energy homeostasis. May directly bind to diacylglycerol (DAGs) and triacylglycerol, which is also important for LD biogenesis. May support directional budding of nacent LDs from the ER into the cytosol by reducing DAG levels at sites of LD formation. May play a role in the regulation of cell morphology, ER morphology and cytoskeletal organization. In Caenorhabditis elegans, this protein is Acyl-coenzyme A diphosphatase FITM2.